Here is a 393-residue protein sequence, read N- to C-terminus: Yellow-related salivary protein SP03B (393 aa).

Positions 1-18 (MKIFLCLIAVVFLQGVVG) are cleaved as a signal peptide. N29 carries an N-linked (GlcNAc...) asparagine glycan.

It belongs to the major royal jelly protein family. In terms of tissue distribution, female salivary gland (at protein level).

The protein resides in the secreted. Its function is as follows. Probably modulates blood feeding of sand flies on vertebrate species by binding and sequestering different mediators involved in the host response. Binds biogenic amines. Binds serotonin with high affinity. Poorly binds histamine. Does not bind dopamine, noradrenaline, adrenaline and octopamine. This Phlebotomus perniciosus (Phlebotomine sand fly) protein is Yellow-related salivary protein SP03B.